The chain runs to 995 residues: Endo-beta-N-acetylglucosaminidase EndoS (995 aa).

The first 36 residues, 1–36 (MDKHLLVKRTLGCVCAATLMGAALATHHDSLNTVKA), serve as a signal peptide directing secretion. In terms of domain architecture, GH18 spans 112–432 (SLYGGYFRTW…KDATDNIFHS (321 aa)). Residues histidine 151, tryptophan 153, and arginine 186 each contribute to the a glycoprotein site. The active-site Proton donor is glutamate 235. A glycoprotein contacts are provided by aspartate 237, glutamine 303, tyrosine 305, glutamate 349, glutamate 350, asparagine 356, and tyrosine 402. LRR repeat units lie at residues 437–460 (SKAL…DFPD), 478–503 (LERF…KFKK), 562–585 (LTGL…DAAT), and 586–609 (LTSL…ENRQ). The tract at residues 765–923 (MVNLAEGATV…VPELQILGYP (159 aa)) is carbohydrate-binding module (CBM). Ca(2+)-binding residues include lysine 786, aspartate 789, glutamine 791, proline 915, and glutamate 916. The three-helix bundle (3H) stretch occupies residues 924 to 995 (LPNADTIMKT…CIEKRQLLKK (72 aa)).

This sequence belongs to the glycosyl hydrolase 18 family. Cleaved by SpeB protease; leading to loss of endoglucosidase activity. EndoS is produced and secreted prior to SpeB, suggesting that it is degraded after acting as a host immune evasion factor.

It is found in the secreted. The protein resides in the host extracellular space. The enzyme catalyses an N(4)-(oligosaccharide-(1-&gt;3)-[oligosaccharide-(1-&gt;6)]-beta-D-Man-(1-&gt;4)-beta-D-GlcNAc-(1-&gt;4)-alpha-D-GlcNAc)-L-asparaginyl-[protein] + H2O = an oligosaccharide-(1-&gt;3)-[oligosaccharide-(1-&gt;6)]-beta-D-Man-(1-&gt;4)-D-GlcNAc + N(4)-(N-acetyl-beta-D-glucosaminyl)-L-asparaginyl-[protein]. Functionally, endoglucosidase that acts as a host immune evasion factor by mediating hydrolysis of the N-linked glycan from the Fc region of host immunoglobulin-gamma (IgG) during infection. Specifically catalyzes the hydrolysis of the beta-1,4 linkage between the first two N-acetylglucosamine residues of the complex-type N-linked glycan located on 'Asn-297' of the Fc region of IgG antibodies (IGHG1, IGHG2, IGHG3 or IGHG4), thereby preventing interaction between IgGs and Fc receptors and ability to activate the complement pathway. Shows a specificity for biantennary complex type N-glycans; does neither cleave larger complex type glycans nor oligomannose and nor hybrid-type glycans. Specifically acts on IgGs; does not act on immunoglobulin alpha, beta, delta or mu. This is Endo-beta-N-acetylglucosaminidase EndoS from Streptococcus pyogenes serotype M1.